A 119-amino-acid chain; its full sequence is Hydrogenase maturation factor HypA (119 aa).

Ni(2+) is bound at residue His2. Zn(2+) is bound by residues Cys73, Cys76, Cys89, and Cys92.

It belongs to the HypA/HybF family.

Its function is as follows. Involved in the maturation of [NiFe] hydrogenases. Required for nickel insertion into the metal center of the hydrogenase. The polypeptide is Hydrogenase maturation factor HypA (Cupriavidus necator (strain ATCC 17699 / DSM 428 / KCTC 22496 / NCIMB 10442 / H16 / Stanier 337) (Ralstonia eutropha)).